Here is a 224-residue protein sequence, read N- to C-terminus: ATP-dependent dethiobiotin synthetase BioD (224 aa).

ATP is bound at residue 13–18 (NVGKTI). Threonine 17 contacts Mg(2+). The active site involves lysine 38. Serine 42 lines the substrate pocket. ATP-binding positions include aspartate 55, 116–119 (EGAG), 176–177 (NN), and asparagine 211. Residues aspartate 55 and glutamate 116 each coordinate Mg(2+).

It belongs to the dethiobiotin synthetase family. In terms of assembly, homodimer. It depends on Mg(2+) as a cofactor.

The protein resides in the cytoplasm. It catalyses the reaction (7R,8S)-7,8-diammoniononanoate + CO2 + ATP = (4R,5S)-dethiobiotin + ADP + phosphate + 3 H(+). It participates in cofactor biosynthesis; biotin biosynthesis; biotin from 7,8-diaminononanoate: step 1/2. Functionally, catalyzes a mechanistically unusual reaction, the ATP-dependent insertion of CO2 between the N7 and N8 nitrogen atoms of 7,8-diaminopelargonic acid (DAPA, also called 7,8-diammoniononanoate) to form a ureido ring. This chain is ATP-dependent dethiobiotin synthetase BioD, found in Buchnera aphidicola subsp. Acyrthosiphon pisum (strain APS) (Acyrthosiphon pisum symbiotic bacterium).